A 377-amino-acid chain; its full sequence is Succinyl-diaminopimelate desuccinylase (377 aa).

His-67 lines the Zn(2+) pocket. Asp-69 is an active-site residue. A Zn(2+)-binding site is contributed by Asp-100. Glu-134 functions as the Proton acceptor in the catalytic mechanism. 3 residues coordinate Zn(2+): Glu-135, Glu-163, and His-349.

This sequence belongs to the peptidase M20A family. DapE subfamily. In terms of assembly, homodimer. It depends on Zn(2+) as a cofactor. Requires Co(2+) as cofactor.

The catalysed reaction is N-succinyl-(2S,6S)-2,6-diaminopimelate + H2O = (2S,6S)-2,6-diaminopimelate + succinate. Its pathway is amino-acid biosynthesis; L-lysine biosynthesis via DAP pathway; LL-2,6-diaminopimelate from (S)-tetrahydrodipicolinate (succinylase route): step 3/3. In terms of biological role, catalyzes the hydrolysis of N-succinyl-L,L-diaminopimelic acid (SDAP), forming succinate and LL-2,6-diaminopimelate (DAP), an intermediate involved in the bacterial biosynthesis of lysine and meso-diaminopimelic acid, an essential component of bacterial cell walls. The protein is Succinyl-diaminopimelate desuccinylase of Actinobacillus pleuropneumoniae serotype 3 (strain JL03).